The sequence spans 689 residues: tRNA wybutosine-synthesizing protein 4 (689 aa).

The tract at residues 1–33 (MTSTSKLDANQLARQRKKLEKDRRKKVYDDQQV) is disordered. A compositionally biased stretch (basic residues) spans 14 to 26 (RQRKKLEKDRRKK). S-adenosyl-L-methionine is bound by residues R84, G111, D137, 183–184 (DL), and E215.

The protein belongs to the methyltransferase superfamily. LCMT family.

It carries out the reaction 7-[(3S)-3-amino-3-carboxypropyl]wyosine(37) in tRNA(Phe) + S-adenosyl-L-methionine = 7-[(3S)-(3-amino-3-methoxycarbonyl)propyl]wyosine(37) in tRNA(Phe) + S-adenosyl-L-homocysteine. It catalyses the reaction 7-[(3S)-(3-amino-3-methoxycarbonyl)propyl]wyosine(37) in tRNA(Phe) + S-adenosyl-L-methionine + CO2 = wybutosine(37) in tRNA(Phe) + S-adenosyl-L-homocysteine + 2 H(+). It functions in the pathway tRNA modification; wybutosine-tRNA(Phe) biosynthesis. Functionally, probable S-adenosyl-L-methionine-dependent methyltransferase that acts as a component of the wybutosine biosynthesis pathway. Wybutosine is a hyper modified guanosine with a tricyclic base found at the 3'-position adjacent to the anticodon of eukaryotic phenylalanine tRNA. May methylate the carboxyl group of leucine residues to form alpha-leucine ester residues. This Candida albicans (strain SC5314 / ATCC MYA-2876) (Yeast) protein is tRNA wybutosine-synthesizing protein 4 (PPM2).